The chain runs to 797 residues: Ubiquitin carboxyl-terminal hydrolase 14 (797 aa).

Residues 156–266 form a UBP-type; degenerate zinc finger; sequence LISEHALTLQ…EHLAHFGIDF (111 aa). Positions 180, 183, 200, and 213 each coordinate Zn(2+). Positions 308 to 796 constitute a USP domain; that stretch reads TGLVNLGNSC…MGYVYFFQRL (489 aa). Cys-317 (nucleophile) is an active-site residue. 2 UBA domains span residues 613-654 and 670-710; these read VANE…LLSH and DIDQ…VFNN. The active-site Proton acceptor is the His-758.

Belongs to the peptidase C19 family. Constitutively and ubiquitously expressed (at protein level).

The enzyme catalyses Thiol-dependent hydrolysis of ester, thioester, amide, peptide and isopeptide bonds formed by the C-terminal Gly of ubiquitin (a 76-residue protein attached to proteins as an intracellular targeting signal).. Recognizes and hydrolyzes the peptide bond at the C-terminal Gly of ubiquitin. Involved in the processing of poly-ubiquitin precursors as well as that of ubiquitinated proteins. Involved in seed and embryo development. The protein is Ubiquitin carboxyl-terminal hydrolase 14 (UBP14) of Arabidopsis thaliana (Mouse-ear cress).